Here is a 101-residue protein sequence, read N- to C-terminus: Large ribosomal subunit protein uL24 (101 aa).

Belongs to the universal ribosomal protein uL24 family. As to quaternary structure, part of the 50S ribosomal subunit.

Its function is as follows. One of two assembly initiator proteins, it binds directly to the 5'-end of the 23S rRNA, where it nucleates assembly of the 50S subunit. One of the proteins that surrounds the polypeptide exit tunnel on the outside of the subunit. The polypeptide is Large ribosomal subunit protein uL24 (Dinoroseobacter shibae (strain DSM 16493 / NCIMB 14021 / DFL 12)).